The sequence spans 66 residues: Small ribosomal subunit protein eS27 (66 aa).

Residues cysteine 21, cysteine 24, cysteine 40, and cysteine 43 each coordinate Zn(2+). Residues 21–43 (CPNCGNEQTIFSHATFPVRCLSC) form a C4-type zinc finger.

This sequence belongs to the eukaryotic ribosomal protein eS27 family. Part of the 30S ribosomal subunit. It depends on Zn(2+) as a cofactor.

In Saccharolobus solfataricus (strain ATCC 35092 / DSM 1617 / JCM 11322 / P2) (Sulfolobus solfataricus), this protein is Small ribosomal subunit protein eS27.